The primary structure comprises 71 residues: uncharacterized protein (71 aa).

Residues 44–66 (LFFLVFRRLFSWFLVLLPSPRFF) form a helical membrane-spanning segment.

It localises to the membrane. This is an uncharacterized protein from Saccharomyces cerevisiae (strain ATCC 204508 / S288c) (Baker's yeast).